The sequence spans 184 residues: Nucleoporin-62 C-terminal-like protein (184 aa).

The stretch at Arg-117–Leu-151 forms a coiled coil.

Belongs to the nucleoporin NSP1/NUP62 family.

In Homo sapiens (Human), this protein is Nucleoporin-62 C-terminal-like protein (NUP62CL).